Here is a 274-residue protein sequence, read N- to C-terminus: Thiazole synthase (274 aa).

Lysine 115 serves as the catalytic Schiff-base intermediate with DXP. Residues glycine 176, 202–203 (AG), and 224–225 (NS) contribute to the 1-deoxy-D-xylulose 5-phosphate site.

This sequence belongs to the ThiG family. In terms of assembly, homotetramer. Forms heterodimers with either ThiH or ThiS.

The protein localises to the cytoplasm. It catalyses the reaction [ThiS sulfur-carrier protein]-C-terminal-Gly-aminoethanethioate + 2-iminoacetate + 1-deoxy-D-xylulose 5-phosphate = [ThiS sulfur-carrier protein]-C-terminal Gly-Gly + 2-[(2R,5Z)-2-carboxy-4-methylthiazol-5(2H)-ylidene]ethyl phosphate + 2 H2O + H(+). The protein operates within cofactor biosynthesis; thiamine diphosphate biosynthesis. Catalyzes the rearrangement of 1-deoxy-D-xylulose 5-phosphate (DXP) to produce the thiazole phosphate moiety of thiamine. Sulfur is provided by the thiocarboxylate moiety of the carrier protein ThiS. In vitro, sulfur can be provided by H(2)S. This chain is Thiazole synthase, found in Psychrobacter arcticus (strain DSM 17307 / VKM B-2377 / 273-4).